The following is a 234-amino-acid chain: LRP chaperone MESD (234 aa).

Residues 1-33 (MAASRWARKAVVLLCASDLLLLLLLLPPPGSCA) form the signal peptide. The chaperone domain stretch occupies residues 1-164 (MAASRWARKA…DRAIFMLRDG (164 aa)). 2 disordered regions span residues 31–95 (SCAA…DFSK) and 187–234 (GQVY…REDL). Positions 54-70 (DIRDYNDADMARLLEQW) are enriched in basic and acidic residues. Over residues 71 to 80 (EKDDDIEEGD) the composition is skewed to acidic residues. The tract at residues 165–204 (SYAWEIKDFLVGQDRCADVTLEGQVYPGKGGGSKEKNKTK) is escort domain. The segment covering 196 to 234 (GSKEKNKTKQDKGKKKKEGDLKSRSSKEENRAGNKREDL) has biased composition (basic and acidic residues). The N-linked (GlcNAc...) asparagine glycan is linked to Asn201. A Prevents secretion from ER motif is present at residues 231-234 (REDL).

This sequence belongs to the MESD family. As to quaternary structure, monomer. Interacts with LRP5; the interaction prevents LRP5 from forming aggregates and chaperones LRP6 to the plasma membrane. Interacts with LRP6; the interaction prevents LRP6 from forming aggregates and chaperones LRP6 to the plasma membrane. Interacts with LRP4; the interaction promotes glycosylation of LRP4 and its cell-surface expression.

Its subcellular location is the endoplasmic reticulum. Functionally, chaperone specifically assisting the folding of beta-propeller/EGF modules within the family of low-density lipoprotein receptors (LDLRs). Acts as a modulator of the Wnt pathway through chaperoning the coreceptors of the canonical Wnt pathway, LRP5 and LRP6, to the plasma membrane. Essential for specification of embryonic polarity and mesoderm induction. Plays an essential role in neuromuscular junction (NMJ) formation by promoting cell-surface expression of LRP4. May regulate phagocytosis of apoptotic retinal pigment epithelium (RPE) cells. The protein is LRP chaperone MESD of Homo sapiens (Human).